The chain runs to 239 residues: Small ribosomal subunit protein uS2 (239 aa).

This sequence belongs to the universal ribosomal protein uS2 family.

The chain is Small ribosomal subunit protein uS2 from Francisella tularensis subsp. tularensis (strain FSC 198).